Consider the following 51-residue polypeptide: Defensin-like protein 1 (51 aa).

At Q1 the chain carries Pyrrolidone carboxylic acid. 4 cysteine pairs are disulfide-bonded: C4/C51, C15/C36, C21/C45, and C25/C47.

In terms of assembly, forms oligomers in its native state.

In terms of biological role, possesses antifungal activity sensitive to inorganic cations. The polypeptide is Defensin-like protein 1 (Sinapis alba (White mustard)).